Here is a 194-residue protein sequence, read N- to C-terminus: Ribosome maturation factor RimM (194 aa).

Positions 92–190 (DDGYYDHELI…ALVVTPPEGL (99 aa)) constitute a PRC barrel domain.

It belongs to the RimM family. In terms of assembly, binds ribosomal protein uS19.

The protein localises to the cytoplasm. Functionally, an accessory protein needed during the final step in the assembly of 30S ribosomal subunit, possibly for assembly of the head region. Essential for efficient processing of 16S rRNA. May be needed both before and after RbfA during the maturation of 16S rRNA. It has affinity for free ribosomal 30S subunits but not for 70S ribosomes. In Corynebacterium urealyticum (strain ATCC 43042 / DSM 7109), this protein is Ribosome maturation factor RimM.